Consider the following 917-residue polypeptide: Alanine--tRNA ligase (917 aa).

Zn(2+) contacts are provided by histidine 592, histidine 596, cysteine 694, and histidine 698.

This sequence belongs to the class-II aminoacyl-tRNA synthetase family. Zn(2+) is required as a cofactor.

The protein resides in the cytoplasm. The catalysed reaction is tRNA(Ala) + L-alanine + ATP = L-alanyl-tRNA(Ala) + AMP + diphosphate. Catalyzes the attachment of alanine to tRNA(Ala) in a two-step reaction: alanine is first activated by ATP to form Ala-AMP and then transferred to the acceptor end of tRNA(Ala). Also edits incorrectly charged Ser-tRNA(Ala) and Gly-tRNA(Ala) via its editing domain. This chain is Alanine--tRNA ligase, found in Sorangium cellulosum (strain So ce56) (Polyangium cellulosum (strain So ce56)).